Consider the following 219-residue polypeptide: Ras-related protein Rab-3B (219 aa).

Ala-2 carries the N-acetylalanine modification. GTP contacts are provided by Ser-31, Ser-32, Val-33, Gly-34, Lys-35, Thr-36, Ser-37, Pro-49, and Ser-53. Thr-36 serves as a coordination point for Mg(2+). A Switch 1 motif is present at residues 45 to 58 (DTFTPAFVSTVGID). Mg(2+) contacts are provided by Thr-54 and Asp-77. The short motif at 78-96 (TAGQERYRTITTAYYRGAM) is the Switch 2 element. Residue Gly-80 participates in GTP binding. The residue at position 86 (Thr-86) is a Phosphothreonine; by LRRK2. Residues Asn-135, Lys-136, Asp-138, Ala-166, and Lys-167 each contribute to the GTP site. Residues Ser-188 and Ser-190 each carry the phosphoserine modification. Residues Cys-217 and Cys-219 are each lipidated (S-geranylgeranyl cysteine). At Cys-219 the chain carries Cysteine methyl ester.

It belongs to the small GTPase superfamily. Rab family. In terms of assembly, interacts with RIMS1, RIMS2, RPH3A and RPH3AL. The GTP-bound form interacts with GAS8/DRC4 (via coiled-coil domains). Interacts with GDI2, CHM and CHML; phosphorylation at Thr-86 disrupts these interactions. Interacts with MADD (via uDENN domain); the GTP-bound form is preferred for interaction. Mg(2+) serves as cofactor. Phosphorylation of Thr-86 in the switch II region by LRRK2 prevents the association of RAB regulatory proteins, including CHM, CHML and RAB GDP dissociation inhibitor GDI2. In terms of tissue distribution, abundantly expressed in testis, lung and brain.

It is found in the cell membrane. Its subcellular location is the golgi apparatus. It catalyses the reaction GTP + H2O = GDP + phosphate + H(+). Its activity is regulated as follows. Regulated by guanine nucleotide exchange factors (GEFs) which promote the exchange of bound GDP for free GTP. Regulated by GTPase activating proteins (GAPs) which increase the GTP hydrolysis activity. Inhibited by GDP dissociation inhibitors (GDIs) which prevent Rab-GDP dissociation. In terms of biological role, the small GTPases Rab are key regulators of intracellular membrane trafficking, from the formation of transport vesicles to their fusion with membranes. Rabs cycle between an inactive GDP-bound form and an active GTP-bound form that is able to recruit to membranes different sets of downstream effectors directly responsible for vesicle formation, movement, tethering and fusion. This is Ras-related protein Rab-3B from Mus musculus (Mouse).